Reading from the N-terminus, the 125-residue chain is MARVKRGTTTHAKHKRILGAAKGYYGRRKNTIRIARQAVEKAGQYAYRDRKVKKRSFRALWIQRINAAVRAEGLTYGVFMHGLKLAGIELDRKVLADIAMHEGEAFSGIIAQAKAALPEGARIAA.

Belongs to the bacterial ribosomal protein bL20 family.

Functionally, binds directly to 23S ribosomal RNA and is necessary for the in vitro assembly process of the 50S ribosomal subunit. It is not involved in the protein synthesizing functions of that subunit. The chain is Large ribosomal subunit protein bL20 from Rhizorhabdus wittichii (strain DSM 6014 / CCUG 31198 / JCM 15750 / NBRC 105917 / EY 4224 / RW1) (Sphingomonas wittichii).